Reading from the N-terminus, the 289-residue chain is Protease HtpX homolog (289 aa).

2 helical membrane passes run 3 to 23 (IVGTILFAFYSVAIAAAWFFF) and 28 to 48 (TILAIAIVGSVVLVGVQYKVG). His129 lines the Zn(2+) pocket. Glu130 is an active-site residue. Zn(2+) is bound at residue His133. Helical transmembrane passes span 144-164 (LGQGIASIVGIVAQYIVLFSG) and 172-192 (FLAIVVGNLVQFLVTLFVLAI). A Zn(2+)-binding site is contributed by Glu197. The interval 222–250 (SQGNEQAAQQQRQRTSRGRGRRQRGQRND) is disordered. The span at 235–246 (RTSRGRGRRQRG) shows a compositional bias: basic residues.

The protein belongs to the peptidase M48B family. Requires Zn(2+) as cofactor.

Its subcellular location is the cell membrane. This chain is Protease HtpX homolog, found in Halobacterium salinarum (strain ATCC 700922 / JCM 11081 / NRC-1) (Halobacterium halobium).